The primary structure comprises 630 residues: A-type voltage-gated potassium channel KCND2 (630 aa).

The Cytoplasmic segment spans residues 1-184 (MAAGVAAWLP…FENPHTSTMA (184 aa)). The interval 2–20 (AAGVAAWLPFARAAAIGWM) is interaction with KCNIP1, KCNIP2, and other family members. A Phosphothreonine modification is found at Thr38. Residues 71–90 (ERDFFYHPETQQYFFDRDPD) are interaction with KCNIP1. Residues His105, Cys111, Cys132, and Cys133 each coordinate Zn(2+). A helical membrane pass occupies residues 185 to 206 (LVFYYVTGFFIAVSVIANVVET). The Extracellular segment spans residues 207 to 226 (VPCGSSPGHIKELPCGERYA). Residues 227-249 (VAFFCLDTACVMIFTVEYLLRLA) traverse the membrane as a helical segment. The Cytoplasmic segment spans residues 250–256 (AAPSRYR). A helical transmembrane segment spans residues 257-281 (FVRSVMSIIDVVAILPYYIGLVMTD). Over 282–287 (NEDVSG) the chain is Extracellular. A helical; Voltage-sensor membrane pass occupies residues 288–307 (AFVTLRVFRVFRIFKFSRHS). The Cytoplasmic portion of the chain corresponds to 308–321 (QGLRILGYTLKSCA). Residues 308–321 (QGLRILGYTLKSCA) form an S4-S5 linker region. A helical transmembrane segment spans residues 322 to 345 (SELGFLLFSLTMAIIIFATVMFYA). Residues 346–357 (EKGSSASKFTSI) lie on the Extracellular side of the membrane. Positions 358 to 369 (PAAFWYTIVTMT) form an intramembrane region, helical. Residues Thr370, Leu371, Gly372, and Tyr373 each contribute to the K(+) site. Residues 370–375 (TLGYGD) carry the Selectivity filter motif. An intramembrane segment occupies 370-377 (TLGYGDMV). The Extracellular portion of the chain corresponds to 378 to 380 (PKT). A helical transmembrane segment spans residues 381–403 (IAGKIFGSICSLSGVLVIALPVP). Over 404–630 (VIVSNFSRIY…GGNIVRVSAL (227 aa)) the chain is Cytoplasmic. Position 438 is a phosphoserine (Ser438). Residues 474–489 (FETQHHHLLHCLEKTT) form a required for dendritic targeting region. The interval 474 to 630 (FETQHHHLLH…GGNIVRVSAL (157 aa)) is important for normal channel activation and inactivation, for interaction with KCNIP2, and probably other family members as well. Residues Ser548, Ser552, Ser572, and Ser575 each carry the phosphoserine modification. The segment at 600-630 (IPTPPVTTPEGDDRPESPEYSGGNIVRVSAL) is disordered. A phosphothreonine mark is found at Thr602 and Thr607. Phosphoserine is present on Ser616. The PDZ-binding motif lies at 627 to 630 (VSAL).

This sequence belongs to the potassium channel family. D (Shal) (TC 1.A.1.2) subfamily. Kv4.2/KCND2 sub-subfamily. In terms of assembly, homotetramer or heterotetramer with KCND1 or KCND3. Associates with the regulatory subunits KCNIP2, KCNIP3 and KCNIP4. Interacts with the regulatory subunit KCNIP1; this interaction mediates the capture of both the N- and C-terminus of KCND2, preventing N-type inactivation and stabilizing the S6 conformation, thereby accelerating closed state inactivation and recovery. In vivo, probably exists as heteromeric complex containing variable proportions of KCND1, KCND2, KCND3, KCNIP1, KCNIP2, KCNIP3, KCNIP4, DPP6 and DPP10. The tetrameric channel can associate with up to four regulatory subunits, such as KCNIP2 or KCNIP4. Interaction with four KCNIP4 chains does not reduce interaction with DPP10. Interacts with DLG4 and NCS1/FREQ. Interacts with DLG1. Probably part of a complex consisting of KCNIP1, KCNIP2 isoform 3 and KCND2. Interacts with FLNA, FLNC and DPP10. Interacts (via S1 and S2 helices) with DPP6; this interaction stabilizes the conformation of the S1-S2 helices and facilitates S4 conformational change, including S4 sliding up and down, thereby accelerating activation, inactivation, and recovery. Post-translationally, phosphorylation at Ser-438 in response to MAPK activation is increased in stimulated dendrites. Interaction with KCNIP2 and DPP6 propomtes phosphorylation by PKA at Ser-552. Phosphorylation at Ser-552 has no effect on interaction with KCNIP3, but is required for the regulation of channel activity by KCNIP3. Phosphorylation at Ser-552 leads to KCND2 internalization. Phosphorylated by MAPK in response to signaling via the metabotropic glutamate receptor GRM5. Phosphorylation at Ser-616 is required for the down-regulation of neuronal A-type currents in response to signaling via GRM5. Detected in ovary, in corpus luteum and in granulosa and theca cells in the follicle (at protein level). Highly expressed throughout the brain. Detected in amygdala, caudate nucleus, cerebellum, hippocampus, substantia nigra and thalamus. Expression is not detectable or very low in heart, kidney, liver, lung, pancreas and skeletal muscle. Not detectable in human heart atrium.

The protein resides in the cell membrane. It localises to the cell projection. It is found in the dendrite. Its subcellular location is the synapse. The protein localises to the perikaryon. The protein resides in the postsynaptic cell membrane. It localises to the dendritic spine. It is found in the cell junction. It catalyses the reaction K(+)(in) = K(+)(out). Functionally, voltage-gated potassium channel that mediates transmembrane potassium transport in excitable membranes, primarily in the brain. Mediates the major part of the dendritic A-type current I(SA) in brain neurons. This current is activated at membrane potentials that are below the threshold for action potentials. It regulates neuronal excitability, prolongs the latency before the first spike in a series of action potentials, regulates the frequency of repetitive action potential firing, shortens the duration of action potentials and regulates the back-propagation of action potentials from the neuronal cell body to the dendrites. Contributes to the regulation of the circadian rhythm of action potential firing in suprachiasmatic nucleus neurons, which regulates the circadian rhythm of locomotor activity. Functions downstream of the metabotropic glutamate receptor GRM5 and plays a role in neuronal excitability and in nociception mediated by activation of GRM5. Mediates the transient outward current I(to) in rodent heart left ventricle apex cells, but not in human heart, where this current is mediated by another family member. Forms tetrameric potassium-selective channels through which potassium ions pass in accordance with their electrochemical gradient. The channel alternates between opened and closed conformations in response to the voltage difference across the membrane. Can form functional homotetrameric channels and heterotetrameric channels that contain variable proportions of KCND2 and KCND3; channel properties depend on the type of pore-forming alpha subunits that are part of the channel. In vivo, membranes probably contain a mixture of heteromeric potassium channel complexes. Interaction with specific isoforms of the regulatory subunits KCNIP1, KCNIP2, KCNIP3 or KCNIP4 strongly increases expression at the cell surface and thereby increases channel activity; it modulates the kinetics of channel activation and inactivation, shifts the threshold for channel activation to more negative voltage values, shifts the threshold for inactivation to less negative voltages and accelerates recovery after inactivation. Likewise, interaction with DPP6 or DPP10 promotes expression at the cell membrane and regulates both channel characteristics and activity. Upon depolarization, the channel goes from a resting closed state (C state) to an activated but non-conducting state (C* state), from there, the channel may either inactivate (I state) or open (O state). This chain is A-type voltage-gated potassium channel KCND2, found in Homo sapiens (Human).